We begin with the raw amino-acid sequence, 1905 residues long: Low-density lipoprotein receptor-related protein 4 (1905 aa).

Positions 1 to 20 (MRRQWGALLLGALLCAHGLA) are cleaved as a signal peptide. Residues 21-1725 (SSPECACGRS…AAPGEGLHIS (1705 aa)) lie on the Extracellular side of the membrane. LDL-receptor class A domains are found at residues 26–67 (ACGR…DGCI), 70–106 (TCSP…QDCP), 109–144 (ECEE…EQCD), 147–183 (KCSD…ENCP), 190–226 (PCNL…SDCS), 230–266 (PCRS…RNCT), 269–305 (MCTA…ENCE), and 311–350 (QCAL…QNCR). 30 disulfides stabilise this stretch: Cys-27-Cys-44, Cys-34-Cys-57, Cys-51-Cys-66, Cys-71-Cys-83, Cys-78-Cys-96, Cys-90-Cys-105, Cys-110-Cys-122, Cys-117-Cys-135, Cys-129-Cys-143, Cys-148-Cys-160, Cys-155-Cys-173, Cys-167-Cys-182, Cys-191-Cys-203, Cys-198-Cys-216, Cys-210-Cys-225, Cys-231-Cys-243, Cys-238-Cys-256, Cys-250-Cys-265, Cys-270-Cys-282, Cys-277-Cys-295, Cys-289-Cys-304, Cys-312-Cys-324, Cys-319-Cys-337, Cys-331-Cys-349, Cys-358-Cys-369, Cys-365-Cys-378, Cys-380-Cys-393, Cys-399-Cys-409, Cys-405-Cys-418, and Cys-420-Cys-433. An N-linked (GlcNAc...) asparagine glycan is attached at Asn-264. One can recognise an EGF-like 1; calcium-binding domain in the interval 354-394 (GEENCNVNNGGCAQKCQMVRGAVQCTCHTGYRLTEDGHTCQ). One can recognise an EGF-like 2; calcium-binding domain in the interval 395–434 (DVNECAEEGYCSQGCTNSEGAFQCWCETGYELRPDRRSCK). 5 LDL-receptor class B repeats span residues 480–522 (ELVF…DWVH), 523–565 (DKLY…HPME), 566–609 (GTIY…DYAG), 610–652 (RRMY…FEDS), and 653–693 (LYWT…LHPQ). N-linked (GlcNAc...) asparagine glycosylation occurs at Asn-498. Residues 698–737 (GKNRCGDNNGGCTHLCLPSGQNYTCACPTGFRKISSHACA) form the EGF-like 3 domain. Cystine bridges form between Cys-702–Cys-713, Cys-709–Cys-722, and Cys-724–Cys-736. Asn-719 is a glycosylation site (N-linked (GlcNAc...) asparagine). 5 LDL-receptor class B repeats span residues 785–827 (DHVY…DWVT), 828–870 (NKLY…EPMG), 871–914 (GYMY…DYGS), 915–956 (QRLY…LYGE), and 957–998 (RIYW…FHRR). Residue Asn-901 is glycosylated (N-linked (GlcNAc...) asparagine). N-linked (GlcNAc...) asparagine glycosylation occurs at Asn-1077. 10 LDL-receptor class B repeats span residues 1093-1135 (GKVY…DAIG), 1136-1178 (RKVY…YHEM), 1179-1222 (GFMY…DKAS), 1223-1263 (SQLL…LLDS), 1264-1306 (YIYW…DRAQ), 1397-1439 (GKVY…DWVA), 1440-1482 (RNLY…FPRK), 1483-1526 (GYLF…DYDT), 1527-1568 (RRIY…QDRW), and 1569-1610 (IYWT…SPQR). N-linked (GlcNAc...) asparagine glycosylation is found at Asn-1415 and Asn-1467. The disordered stretch occupies residues 1659–1686 (PRATGMSEKSPVLPNTPPTTLYSSTTRT). Over residues 1676 to 1686 (PTTLYSSTTRT) the composition is skewed to low complexity. A helical membrane pass occupies residues 1726–1746 (YAIGGLLSILLILVVIAALML). At 1747 to 1905 (YRHKKSKFTD…ERKLSSESQV (159 aa)) the chain is on the cytoplasmic side. The Endocytosis signal motif lies at 1766–1769 (NPSY). The tract at residues 1852–1905 (ASSGSLDDTETEQLLQEEQSECSSVHTAATPERRGSLPDTGWKHERKLSSESQV) is disordered. The span at 1882-1905 (PERRGSLPDTGWKHERKLSSESQV) shows a compositional bias: basic and acidic residues.

The protein belongs to the LDLR family. As to quaternary structure, homooligomer. Interacts with MUSK; the heterodimer forms an AGRIN receptor complex that binds AGRIN resulting in activation of MUSK. Interacts (via the extracellular domain) with SOST; the interaction facilitates the inhibition of Wnt signaling. Interacts with MESD; the interaction promotes glycosylation of LRP4 and its cell-surface expression. Expressed in bone; present in osteoblasts and osteocytes. No expression is observed in osteoclast. Expressed in several regions of the brain.

Its subcellular location is the cell membrane. Functionally, mediates SOST-dependent inhibition of bone formation. Functions as a specific facilitator of SOST-mediated inhibition of Wnt signaling. Plays a key role in the formation and the maintenance of the neuromuscular junction (NMJ), the synapse between motor neuron and skeletal muscle. Directly binds AGRIN and recruits it to the MUSK signaling complex. Mediates the AGRIN-induced phosphorylation of MUSK, the kinase of the complex. The activation of MUSK in myotubes induces the formation of NMJ by regulating different processes including the transcription of specific genes and the clustering of AChR in the postsynaptic membrane. Alternatively, may be involved in the negative regulation of the canonical Wnt signaling pathway, being able to antagonize the LRP6-mediated activation of this pathway. More generally, has been proposed to function as a cell surface endocytic receptor binding and internalizing extracellular ligands for degradation by lysosomes. May play an essential role in the process of digit differentiation. This is Low-density lipoprotein receptor-related protein 4 (LRP4) from Homo sapiens (Human).